A 522-amino-acid chain; its full sequence is Putative aminopeptidase W07G4.4 (522 aa).

The Zn(2+) site is built by lysine 271 and aspartate 276. Lysine 283 is a catalytic residue. Zn(2+)-binding residues include aspartate 294, aspartate 354, and glutamate 356. Arginine 358 is an active-site residue.

It belongs to the peptidase M17 family. The cofactor is Zn(2+).

This is Putative aminopeptidase W07G4.4 (lap-2) from Caenorhabditis elegans.